We begin with the raw amino-acid sequence, 526 residues long: ESX-1 secretion-associated protein EspB (526 aa).

Residues 1-23 (MSEELKYELPGLERKAHECESTR) show a composition bias toward basic and acidic residues. Disordered regions lie at residues 1-35 (MSEELKYELPGLERKAHECESTRPEGPGDATKPDE), 91-110 (RQMNGSDAPPPAAEAVVPDM), and 271-526 (QIQE…GKQQ). The span at 303–328 (GGPGGPGSGSGGGSGGGASGGSGGGT) shows a compositional bias: gly residues. A compositionally biased stretch (low complexity) spans 335–362 (PSTDPSMSPMSTNSAGEEQSSGSPSSGG). Residues 363–387 (SSSGGSPSGGSPSGGGAPSSGGMPE) are compositionally biased toward gly residues. Over residues 393 to 405 (DMPGGPDIPGLDD) the composition is skewed to low complexity. A compositionally biased stretch (gly residues) spans 413–429 (AGGGGGGGVGGGGGGGM). Residues 430 to 440 (PAAPLGPAVGA) are compositionally biased toward low complexity. The span at 451 to 484 (RGGGVGVPTGTGGGAGGMMGGGMGGMGAGHGQGQ) shows a compositional bias: gly residues. Over residues 485–508 (GKEKKRDPKLAPDEDLYTEDRAHS) the composition is skewed to basic and acidic residues.

It belongs to the EspB family.

It localises to the secreted. Its function is as follows. Involved in DNA conjugation, at least in the recipient strain. This is ESX-1 secretion-associated protein EspB from Mycolicibacterium smegmatis (strain MKD8) (Mycobacterium smegmatis).